A 418-amino-acid polypeptide reads, in one-letter code: Zinc metalloproteinase nas-8 (418 aa).

An N-terminal signal peptide occupies residues 1–28; it reads MMNRASLCRIAVLLCILHLSHLIDSTYA. The propeptide occupies 29–100; sequence QSYLTEKDFL…TSKLKSGVRR (72 aa). A Peptidase M12A domain is found at 101-296; it reads NGVTSVIKRW…LKINKLYNCP (196 aa). Intrachain disulfides connect cysteine 143-cysteine 295, cysteine 165-cysteine 184, cysteine 347-cysteine 381, cysteine 354-cysteine 374, and cysteine 361-cysteine 378. Histidine 192 serves as a coordination point for Zn(2+). Glutamate 193 is an active-site residue. Zn(2+) contacts are provided by histidine 196 and histidine 202. A ShKT domain is found at 347–381; that stretch reads CSDRTNLCWRWLDRCRSYFFEKIMKEFCALSCGYC.

Zn(2+) is required as a cofactor.

The protein resides in the secreted. The catalysed reaction is Hydrolysis of peptide bonds in substrates containing five or more amino acids, preferentially with Ala in P1', and Pro in P2'.. Its activity is regulated as follows. Inhibited by ethylene glycol-bis(2-aminoethylether)-N,N,N,N-tetraacetic acid (EGTA), ethylenediaminetetraacetic acid (EDTA) and o-phenanthroline. Functionally, metalloprotease. In Steinernema carpocapsae (Entomopathogenic nematode), this protein is Zinc metalloproteinase nas-8.